Here is a 519-residue protein sequence, read N- to C-terminus: Na(+)/H(+) exchange regulatory cofactor NHE-RF3 (519 aa).

In terms of domain architecture, PDZ 1 spans 9–90 (ECKLSKQEGQ…SVTLLVLDGD (82 aa)). Residues serine 108, serine 148, serine 192, serine 250, serine 334, and serine 348 each carry the phosphoserine modification. PDZ domains are found at residues 128-215 (EPCA…VDKE) and 243-323 (VVVI…LDKE). The tract at residues 348-374 (SVKEGPAPIPAPLEATGSEPTEDAEGH) is disordered. The 81-residue stretch at 378–458 (LCRLLKEDDS…HVTLLVCGKM (81 aa)) folds into the PDZ 4 domain. Phosphothreonine is present on residues threonine 451 and threonine 488. The segment at 479–519 (VAGPDEKGETSAESEHDAHPAKDRTLSTASHSSSNSEDTEM) is disordered. Basic and acidic residues predominate over residues 482–503 (PDEKGETSAESEHDAHPAKDRT). Phosphoserine occurs at positions 489 and 492. The residue at position 503 (threonine 503) is a Phosphothreonine. A compositionally biased stretch (low complexity) spans 505–519 (STASHSSSNSEDTEM). Phosphoserine occurs at positions 508, 510, 511, 512, and 514.

It belongs to the NHER family. In terms of assembly, interacts with PDZK1IP1 and ABCC2. Binds to the C-terminal region of SLC26A3. Interacts (via C-terminal PDZ domain) with SLC26A6 (via C-terminal domain). Interacts (via C-terminal PDZ domain) with SLC9A3 (via C-terminal domain). Component of a complex, composed of PDZK1, SYNGAP1, KLHL17 and NMDA receptors. Interacts (via PDZ1 domain) directly with KLHL17; the interaction is important for integrity of actin cytoskeleton structures in neurons. Forms a heterodimeric complex with NHERF1. Interacts with AKAP2, BCR, CFTR, SLCO1A1, SLC22A12, SLC22A4, SLC22A5, SLC26A6, NHERF2 and SLC17A1. Interacts (via the first PDZ domain) with PTGIR (via non-isoprenylated C-terminus). Interacts (via PDZ domains 1 and 3) with SCARB1 (C-terminal domain). Interacts (via PDZ domains 1 and 3) with SLC5A8 (via PDZ-binding motif); interaction increases nicotinate transport activity of SLC5A8. As to expression, expressed in kidney, liver, small intestine. brain, lung, and testis (at protein level).

The protein resides in the membrane. The protein localises to the cell membrane. A scaffold protein that connects plasma membrane proteins and regulatory components, regulating their surface expression in epithelial cells apical domains. May be involved in the coordination of a diverse range of regulatory processes for ion transport and second messenger cascades. In complex with NHERF1, may cluster proteins that are functionally dependent in a mutual fashion and modulate the trafficking and the activity of the associated membrane proteins. May play a role in the cellular mechanisms associated with multidrug resistance through its interaction with ABCC2 and PDZK1IP1. May potentiate the CFTR chloride channel activity. Required for normal cell-surface expression of SCARB1. Plays a role in maintaining normal plasma cholesterol levels via its effects on SCARB1. Plays a role in the normal localization and function of the chloride-anion exchanger SLC26A6 to the plasma membrane in the brush border of the proximal tubule of the kidney. May be involved in the regulation of proximal tubular Na(+)-dependent inorganic phosphate cotransport therefore playing an important role in tubule function. This Mus musculus (Mouse) protein is Na(+)/H(+) exchange regulatory cofactor NHE-RF3 (Pdzk1).